The sequence spans 303 residues: uncharacterized protein (303 aa).

A signal peptide spans 1–24 (MNRIALVFLYSLFLFNLAIGRVES). The N-linked (GlcNAc...) asparagine glycan is linked to asparagine 116. Residues 124–179 (FTRQQQKKSHDDDDDDDDSDSDESKEEEEKKKRDRKHRRDKRQAITQGSQNNTDPN) are disordered. A compositionally biased stretch (acidic residues) spans 135–149 (DDDDDDDSDSDESKE). The span at 155–164 (KRDRKHRRDK) shows a compositional bias: basic residues. Residues 167–178 (AITQGSQNNTDP) are compositionally biased toward polar residues.

This is an uncharacterized protein from Caenorhabditis elegans.